We begin with the raw amino-acid sequence, 205 residues long: MRIGVLGFQGGVYEHVYMLKKSFHELGINGKVLIVKKPQQLHDLDGIIIPGGESTTISILARKTNVLELLREKIVEGLPVMGVCAGAIMLAKEVVDQVVGETKQPLLGVMDIAVTRNYFGRQRESFELDIVLDELDDKPFRAVFIRAPAITKYWGATKPIGIINYNGEKVVVAARENNKLALSFHPELTSDTRIHRYFIEKIIKK.

52-54 provides a ligand contact to L-glutamine; sequence GES. C84 (nucleophile) is an active-site residue. L-glutamine contacts are provided by residues R116 and 145–146; that span reads IR. Catalysis depends on charge relay system residues H185 and E187.

The protein belongs to the glutaminase PdxT/SNO family. In the presence of PdxS, forms a dodecamer of heterodimers. Only shows activity in the heterodimer.

It carries out the reaction aldehydo-D-ribose 5-phosphate + D-glyceraldehyde 3-phosphate + L-glutamine = pyridoxal 5'-phosphate + L-glutamate + phosphate + 3 H2O + H(+). The enzyme catalyses L-glutamine + H2O = L-glutamate + NH4(+). The protein operates within cofactor biosynthesis; pyridoxal 5'-phosphate biosynthesis. Functionally, catalyzes the hydrolysis of glutamine to glutamate and ammonia as part of the biosynthesis of pyridoxal 5'-phosphate. The resulting ammonia molecule is channeled to the active site of PdxS. In Staphylothermus marinus (strain ATCC 43588 / DSM 3639 / JCM 9404 / F1), this protein is Pyridoxal 5'-phosphate synthase subunit PdxT.